A 546-amino-acid chain; its full sequence is (-)-5-epieremophilene synthase STPS2 (546 aa).

Asp299, Asp303, Asp442, Thr446, and Glu450 together coordinate Mg(2+). The short motif at 299–303 (DDTYD) is the DDXXD motif element.

The protein belongs to the terpene synthase family. Tpsa subfamily. Monomer. It depends on Mg(2+) as a cofactor. In terms of tissue distribution, highly expressed in leaves. Expressed at levels in flowers.

It catalyses the reaction (2E,6E)-farnesyl diphosphate = (-)-5-epi-eremophilene + diphosphate. The protein operates within secondary metabolite biosynthesis; terpenoid biosynthesis. Its function is as follows. Sesquiterpene synthase that catalyzes the conversion of farnesyl diphosphate to (-)-5-epi-eremophilene. The chain is (-)-5-epieremophilene synthase STPS2 from Salvia miltiorrhiza (Chinese sage).